We begin with the raw amino-acid sequence, 138 residues long: ATP synthase epsilon chain (138 aa).

The protein belongs to the ATPase epsilon chain family. In terms of assembly, F-type ATPases have 2 components, CF(1) - the catalytic core - and CF(0) - the membrane proton channel. CF(1) has five subunits: alpha(3), beta(3), gamma(1), delta(1), epsilon(1). CF(0) has three main subunits: a, b and c.

The protein localises to the cell membrane. In terms of biological role, produces ATP from ADP in the presence of a proton gradient across the membrane. The protein is ATP synthase epsilon chain of Caldanaerobacter subterraneus subsp. tengcongensis (strain DSM 15242 / JCM 11007 / NBRC 100824 / MB4) (Thermoanaerobacter tengcongensis).